The following is a 95-amino-acid chain: DNA/RNA-binding protein Alba (95 aa).

An N6-acetyllysine modification is found at K13.

It belongs to the histone-like Alba family. In terms of processing, acetylated. Acetylation at Lys-13 decreases DNA-binding affinity.

It localises to the cytoplasm. The protein resides in the chromosome. Functionally, binds double-stranded DNA tightly but without sequence specificity. Involved in DNA compaction. The sequence is that of DNA/RNA-binding protein Alba from Nitrosopumilus maritimus (strain SCM1).